We begin with the raw amino-acid sequence, 251 residues long: Uridylate kinase (251 aa).

11–14 (KLSG) provides a ligand contact to ATP. The involved in allosteric activation by GTP stretch occupies residues 19–24 (GNQGFG). UMP is bound at residue G53. G54 and R58 together coordinate ATP. UMP-binding positions include D73 and 134-141 (TGNPYFTT). Residues T161, Y167, and D170 each contribute to the ATP site.

It belongs to the UMP kinase family. Homohexamer.

It is found in the cytoplasm. It carries out the reaction UMP + ATP = UDP + ADP. It functions in the pathway pyrimidine metabolism; CTP biosynthesis via de novo pathway; UDP from UMP (UMPK route): step 1/1. With respect to regulation, allosterically activated by GTP. Inhibited by UTP. In terms of biological role, catalyzes the reversible phosphorylation of UMP to UDP. This Protochlamydia amoebophila (strain UWE25) protein is Uridylate kinase.